The primary structure comprises 304 residues: N-acetyl-D-glucosamine kinase (304 aa).

Residues 4–11 (GLDIGGTK) and 133–140 (GFGGGFVL) contribute to the ATP site. Positions 157, 178, 180, and 185 each coordinate Zn(2+).

This sequence belongs to the ROK (NagC/XylR) family. NagK subfamily.

The enzyme catalyses N-acetyl-D-glucosamine + ATP = N-acetyl-D-glucosamine 6-phosphate + ADP + H(+). It participates in cell wall biogenesis; peptidoglycan recycling. Catalyzes the phosphorylation of N-acetyl-D-glucosamine (GlcNAc) derived from cell-wall degradation, yielding GlcNAc-6-P. This is N-acetyl-D-glucosamine kinase from Haemophilus influenzae (strain 86-028NP).